The following is a 288-amino-acid chain: Proteasome assembly chaperone 1 (288 aa).

Ala2 carries the post-translational modification N-acetylalanine. Residues 12-38 (TPCRAGTEEEEEEEDGNRETPEDREVR) form a disordered region. Thr18 carries the phosphothreonine modification. Over residues 28 to 38 (NRETPEDREVR) the composition is skewed to basic and acidic residues. A Phosphothreonine modification is found at Thr54. At Ser180 the chain carries Phosphoserine. Lys264 carries the N6-acetyllysine modification.

This sequence belongs to the PSMG1 family. In terms of assembly, forms a heterodimer with PSMG2. The PSMG1-PSMG2 heterodimer interacts directly with the PSMA5 and PSMA7 proteasome alpha subunits. Post-translationally, degraded by the proteasome upon completion of 20S proteasome maturation.

The protein resides in the cytoplasm. The protein localises to the endoplasmic reticulum. Its function is as follows. Chaperone protein which promotes assembly of the 20S proteasome as part of a heterodimer with PSMG2. The PSMG1-PSMG2 heterodimer binds to the PSMA5 and PSMA7 proteasome subunits, promotes assembly of the proteasome alpha subunits into the heteroheptameric alpha ring and prevents alpha ring dimerization. In Bos taurus (Bovine), this protein is Proteasome assembly chaperone 1.